The following is a 384-amino-acid chain: Gastrin-releasing peptide receptor (384 aa).

Residues 1–38 are Extracellular-facing; it reads MALNDCFLLNLEVDHFMHCNISSHSADLPVNDDWSHPG. The N-linked (GlcNAc...) asparagine glycan is linked to Asn20. Residues 39-62 form a helical membrane-spanning segment; sequence ILYVIPAVYGVIILIGLIGNITLI. Over 63 to 76 the chain is Cytoplasmic; it reads KIFCTVKSMRNVPN. Residues 77 to 96 form a helical membrane-spanning segment; the sequence is LFISSLALGDLLLLITCAPV. Topologically, residues 97 to 114 are extracellular; sequence DASRYLADRWLFGRIGCK. Cysteines 113 and 196 form a disulfide. A helical membrane pass occupies residues 115 to 136; that stretch reads LIPFIQLTSVGVSVFTLTALSA. The Cytoplasmic segment spans residues 137–152; the sequence is DRYKAIVRPMDIQASH. A helical transmembrane segment spans residues 153–174; that stretch reads ALMKICLKAAFIWIISMLLAIP. The Extracellular segment spans residues 175-208; it reads EAVFSDLHPFHEESTNQTFISCAPYPHSNELHPK. The chain crosses the membrane as a helical span at residues 209-234; the sequence is IHSMASFLVFYVIPLSIISVYYYFIA. Topologically, residues 235–264 are cytoplasmic; the sequence is KNLIQSAYNLPVEGNIHVKKQIESRKRLAK. The helical transmembrane segment at 265–285 threads the bilayer; sequence TVLVFVGLFAFCWLPNHVIYL. Topologically, residues 286–298 are extracellular; the sequence is YRSYHYSEVDTSM. A helical membrane pass occupies residues 299–325; the sequence is LHFVTSICARLLAFTNSCVNPFALYLL. Residues 326-384 are Cytoplasmic-facing; sequence SKSFRKQFNTQLLCCQPGLIIRSHSTGRSTTCMTSLKSTNPSVATFSLINGNICHERYV. The S-palmitoyl cysteine moiety is linked to residue Cys339. Ser350 bears the Phosphoserine mark.

This sequence belongs to the G-protein coupled receptor 1 family. Highly expressed in pancreas. Also expressed in stomach, adrenal cortex and brain. In brain, expressed in cells throughout the cortex.

Its subcellular location is the cell membrane. Functionally, receptor for gastrin-releasing peptide (GRP). Signals via association with G proteins that activate a phosphatidylinositol-calcium second messenger system, resulting in Akt phosphorylation. Contributes to the regulation of food intake. Contributes to the perception of prurient stimuli and transmission of itch signals in the spinal cord that promote scratching behavior, but does not play a role in the perception of pain. Contributes primarily to nonhistaminergic itch sensation. In one study, shown to act in the amygdala as part of an inhibitory network which inhibits memory specifically related to learned fear. In another study, shown to contribute to disinhibition of glutamatergic cells in the auditory cortex via signaling on vasoactive intestinal peptide-expressing cells which leads to enhanced auditory fear memories. Contributes to the induction of sighing through signaling in the pre-Botzinger complex, a cluster of several thousand neurons in the ventrolateral medulla responsible for inspiration during respiratory activity. This is Gastrin-releasing peptide receptor (GRPR) from Homo sapiens (Human).